A 353-amino-acid chain; its full sequence is UDP-N-acetylglucosamine--N-acetylmuramyl-(pentapeptide) pyrophosphoryl-undecaprenol N-acetylglucosamine transferase (353 aa).

UDP-N-acetyl-alpha-D-glucosamine is bound by residues 15–17 (TGG), Asn-125, Arg-165, Ser-186, and Gln-286.

It belongs to the glycosyltransferase 28 family. MurG subfamily.

The protein resides in the cell inner membrane. It catalyses the reaction di-trans,octa-cis-undecaprenyl diphospho-N-acetyl-alpha-D-muramoyl-L-alanyl-D-glutamyl-meso-2,6-diaminopimeloyl-D-alanyl-D-alanine + UDP-N-acetyl-alpha-D-glucosamine = di-trans,octa-cis-undecaprenyl diphospho-[N-acetyl-alpha-D-glucosaminyl-(1-&gt;4)]-N-acetyl-alpha-D-muramoyl-L-alanyl-D-glutamyl-meso-2,6-diaminopimeloyl-D-alanyl-D-alanine + UDP + H(+). Its pathway is cell wall biogenesis; peptidoglycan biosynthesis. In terms of biological role, cell wall formation. Catalyzes the transfer of a GlcNAc subunit on undecaprenyl-pyrophosphoryl-MurNAc-pentapeptide (lipid intermediate I) to form undecaprenyl-pyrophosphoryl-MurNAc-(pentapeptide)GlcNAc (lipid intermediate II). The sequence is that of UDP-N-acetylglucosamine--N-acetylmuramyl-(pentapeptide) pyrophosphoryl-undecaprenol N-acetylglucosamine transferase from Chlamydia muridarum (strain MoPn / Nigg).